The chain runs to 292 residues: 4-diphosphocytidyl-2-C-methyl-D-erythritol kinase (292 aa).

Lysine 11 is an active-site residue. An ATP-binding site is contributed by 95-105 (PVSAGLAGGSS). The active site involves aspartate 137.

This sequence belongs to the GHMP kinase family. IspE subfamily.

It carries out the reaction 4-CDP-2-C-methyl-D-erythritol + ATP = 4-CDP-2-C-methyl-D-erythritol 2-phosphate + ADP + H(+). Its pathway is isoprenoid biosynthesis; isopentenyl diphosphate biosynthesis via DXP pathway; isopentenyl diphosphate from 1-deoxy-D-xylulose 5-phosphate: step 3/6. In terms of biological role, catalyzes the phosphorylation of the position 2 hydroxy group of 4-diphosphocytidyl-2C-methyl-D-erythritol. In Alkaliphilus oremlandii (strain OhILAs) (Clostridium oremlandii (strain OhILAs)), this protein is 4-diphosphocytidyl-2-C-methyl-D-erythritol kinase.